The sequence spans 273 residues: DnaJ homolog subfamily C member 27-A (273 aa).

GTP contacts are provided by residues 23 to 30, 71 to 75, and 134 to 137; these read GNAEVGKS, DMAGH, and NKID. In terms of domain architecture, J spans 217–273; that stretch reads DSWDMLGVKPGATRDEVNKAYRKLAVLLHPDKCMAPGSEDAFKAVVNARTALLKNIK.

Belongs to the small GTPase superfamily. Rab family.

It is found in the nucleus. Its function is as follows. GTPase possibly involved in regulation of the MEK/ERK pathway. This chain is DnaJ homolog subfamily C member 27-A (dnajc27-a), found in Xenopus laevis (African clawed frog).